The chain runs to 586 residues: Eukaryotic translation initiation factor 3 subunit D (586 aa).

Disordered stretches follow at residues 16–37 (EDSW…YAPF) and 104–176 (KRTF…REPS). The span at 108-131 (GRGGGTVFRGRAQRGGAGQRGGRA) shows a compositional bias: gly residues. Residues 162–174 (GWKDYDKPQRTRE) show a composition bias toward basic and acidic residues. The tract at residues 301–315 (SIDLVTVNENAADAP) is RNA gate. The tract at residues 563-586 (ANTFEEDDEAADEQEEKATEESEE) is disordered. Positions 566 to 577 (FEEDDEAADEQE) are enriched in acidic residues.

Belongs to the eIF-3 subunit D family. Component of the eukaryotic translation initiation factor 3 (eIF-3) complex.

It is found in the cytoplasm. Functionally, mRNA cap-binding component of the eukaryotic translation initiation factor 3 (eIF-3) complex, which is involved in protein synthesis of a specialized repertoire of mRNAs and, together with other initiation factors, stimulates binding of mRNA and methionyl-tRNAi to the 40S ribosome. The eIF-3 complex specifically targets and initiates translation of a subset of mRNAs involved in cell proliferation. In the eIF-3 complex, eif3d specifically recognizes and binds the 7-methylguanosine cap of a subset of mRNAs. In Aspergillus clavatus (strain ATCC 1007 / CBS 513.65 / DSM 816 / NCTC 3887 / NRRL 1 / QM 1276 / 107), this protein is Eukaryotic translation initiation factor 3 subunit D.